A 145-amino-acid polypeptide reads, in one-letter code: Histone H2B.1, sperm (145 aa).

The disordered stretch occupies residues methionine 1–arginine 52. 4 short sequence motifs (SPKK motif) span residues serine 6–lysine 9, serine 11–lysine 14, serine 16–lysine 19, and serine 21–lysine 24. Basic residues-rich tracts occupy residues proline 7 to proline 22 and lysine 30 to arginine 52. Serine 16 and serine 21 each carry phosphoserine. Serine 132 is a glycosylation site (O-linked (GlcNAc) serine). Lysine 140 participates in a covalent cross-link: Glycyl lysine isopeptide (Lys-Gly) (interchain with G-Cter in ubiquitin).

Belongs to the histone H2B family. The nucleosome is a histone octamer containing two molecules each of H2A, H2B, H3 and H4 assembled in one H3-H4 heterotetramer and two H2A-H2B heterodimers. The octamer wraps approximately 147 bp of DNA. Monoubiquitination of Lys-140 gives a specific tag for epigenetic transcriptional activation and is also prerequisite for histone H3 'Lys-4' and 'Lys-79' methylation. Post-translationally, phosphorylated on SPKK motifs 3 and 4; which may regulate DNA binding. Dephosphorylated during maturation of spermatids to mature sperm and rephosphorylated at fertilization. In terms of processing, glcNAcylation at Ser-132 promotes monoubiquitination of Lys-140. It fluctuates in response to extracellular glucose, and associates with transcribed genes.

It is found in the nucleus. The protein localises to the chromosome. Its function is as follows. Core component of nucleosome. Nucleosomes wrap and compact DNA into chromatin, limiting DNA accessibility to the cellular machineries which require DNA as a template. Histones thereby play a central role in transcription regulation, DNA repair, DNA replication and chromosomal stability. DNA accessibility is regulated via a complex set of post-translational modifications of histones, also called histone code, and nucleosome remodeling. The chain is Histone H2B.1, sperm from Parechinus angulosus (Angulate sea urchin).